Reading from the N-terminus, the 876-residue chain is Aspartate--tRNA(Asp/Asn) ligase (876 aa).

The segment at 1–278 is unknown; sequence MAATDTPWRP…FGFKRAYEGF (278 aa). The tract at residues 279-876 is aspartyl-tRNA synthetase; sequence MHVYRSHTCG…PKPKKEVKEG (598 aa). Glutamate 453 serves as a coordination point for L-aspartate. The segment at 477 to 480 is aspartate; it reads QQFK. The L-aspartate site is built by arginine 499 and histidine 729. 499–501 provides a ligand contact to ATP; it reads RDE. Glutamate 763 lines the ATP pocket. Arginine 770 is a binding site for L-aspartate. An ATP-binding site is contributed by 815–818; it reads GVDR.

Belongs to the class-II aminoacyl-tRNA synthetase family. Type 1 subfamily. As to quaternary structure, homodimer.

The protein resides in the cytoplasm. The catalysed reaction is tRNA(Asx) + L-aspartate + ATP = L-aspartyl-tRNA(Asx) + AMP + diphosphate. Its function is as follows. Aspartyl-tRNA synthetase with relaxed tRNA specificity since it is able to aspartylate not only its cognate tRNA(Asp) but also tRNA(Asn). Reaction proceeds in two steps: L-aspartate is first activated by ATP to form Asp-AMP and then transferred to the acceptor end of tRNA(Asp/Asn). This Paramagnetospirillum magneticum (strain ATCC 700264 / AMB-1) (Magnetospirillum magneticum) protein is Aspartate--tRNA(Asp/Asn) ligase (aspS).